Reading from the N-terminus, the 141-residue chain is Large ribosomal subunit protein uL11 (141 aa).

It belongs to the universal ribosomal protein uL11 family. As to quaternary structure, part of the ribosomal stalk of the 50S ribosomal subunit. Interacts with L10 and the large rRNA to form the base of the stalk. L10 forms an elongated spine to which L12 dimers bind in a sequential fashion forming a multimeric L10(L12)X complex. In terms of processing, one or more lysine residues are methylated.

In terms of biological role, forms part of the ribosomal stalk which helps the ribosome interact with GTP-bound translation factors. The chain is Large ribosomal subunit protein uL11 from Thermosipho africanus (strain TCF52B).